A 30-amino-acid chain; its full sequence is MISDSQIFVALLFALVSAVLAIRLGTDLYQ.

The chain crosses the membrane as a helical span at residues 7–26 (IFVALLFALVSAVLAIRLGT).

It belongs to the PsaM family.

Its subcellular location is the plastid. The protein localises to the chloroplast thylakoid membrane. The protein is Photosystem I reaction center subunit XII of Gracilaria tenuistipitata var. liui (Red alga).